The sequence spans 92 residues: Small ribosomal subunit protein uS19 (92 aa).

This sequence belongs to the universal ribosomal protein uS19 family.

In terms of biological role, protein S19 forms a complex with S13 that binds strongly to the 16S ribosomal RNA. This Desulfosudis oleivorans (strain DSM 6200 / JCM 39069 / Hxd3) (Desulfococcus oleovorans) protein is Small ribosomal subunit protein uS19.